The chain runs to 350 residues: Arginine N-succinyltransferase (350 aa).

Residue L125 coordinates succinyl-CoA. The Proton donor role is filled by H229.

Belongs to the arginine N-succinyltransferase family.

It carries out the reaction succinyl-CoA + L-arginine = N(2)-succinyl-L-arginine + CoA + H(+). It functions in the pathway amino-acid degradation; L-arginine degradation via AST pathway; L-glutamate and succinate from L-arginine: step 1/5. Its function is as follows. Catalyzes the transfer of succinyl-CoA to arginine to produce N(2)-succinylarginine. This chain is Arginine N-succinyltransferase, found in Yersinia pseudotuberculosis serotype O:3 (strain YPIII).